Consider the following 434-residue polypeptide: GTPase Obg (434 aa).

Residues 1–158 (MFIDRAKIYV…RWLYLELKLL (158 aa)) enclose the Obg domain. The region spanning 159–328 (ADVGLLGLPN…LLELMEKYVK (170 aa)) is the OBG-type G domain. GTP-binding positions include 165–172 (GLPNAGKS), 190–194 (FTTKT), 211–214 (DIPG), 280–283 (NKID), and 309–311 (SAK). Residues serine 172 and threonine 192 each contribute to the Mg(2+) site. An OCT domain is found at 347-425 (KQENKKQEIP…IGNYVFKYNS (79 aa)).

The protein belongs to the TRAFAC class OBG-HflX-like GTPase superfamily. OBG GTPase family. In terms of assembly, monomer. It depends on Mg(2+) as a cofactor.

It is found in the cytoplasm. In terms of biological role, an essential GTPase which binds GTP, GDP and possibly (p)ppGpp with moderate affinity, with high nucleotide exchange rates and a fairly low GTP hydrolysis rate. Plays a role in control of the cell cycle, stress response, ribosome biogenesis and in those bacteria that undergo differentiation, in morphogenesis control. The chain is GTPase Obg from Dictyoglomus turgidum (strain DSM 6724 / Z-1310).